The chain runs to 332 residues: Ketol-acid reductoisomerase (NADP(+)) (332 aa).

Residues Met-1–Thr-182 enclose the KARI N-terminal Rossmann domain. NADP(+) contacts are provided by residues Tyr-25 to Gln-28 and Asp-83 to Gln-86. Residue His-108 is part of the active site. Position 134 (Gly-134) interacts with NADP(+). The region spanning Thr-183–Leu-328 is the KARI C-terminal knotted domain. 4 residues coordinate Mg(2+): Asp-191, Glu-195, Glu-227, and Glu-231. Ser-252 provides a ligand contact to substrate.

It belongs to the ketol-acid reductoisomerase family. The cofactor is Mg(2+).

The enzyme catalyses (2R)-2,3-dihydroxy-3-methylbutanoate + NADP(+) = (2S)-2-acetolactate + NADPH + H(+). The catalysed reaction is (2R,3R)-2,3-dihydroxy-3-methylpentanoate + NADP(+) = (S)-2-ethyl-2-hydroxy-3-oxobutanoate + NADPH + H(+). It functions in the pathway amino-acid biosynthesis; L-isoleucine biosynthesis; L-isoleucine from 2-oxobutanoate: step 2/4. The protein operates within amino-acid biosynthesis; L-valine biosynthesis; L-valine from pyruvate: step 2/4. Functionally, involved in the biosynthesis of branched-chain amino acids (BCAA). Catalyzes an alkyl-migration followed by a ketol-acid reduction of (S)-2-acetolactate (S2AL) to yield (R)-2,3-dihydroxy-isovalerate. In the isomerase reaction, S2AL is rearranged via a Mg-dependent methyl migration to produce 3-hydroxy-3-methyl-2-ketobutyrate (HMKB). In the reductase reaction, this 2-ketoacid undergoes a metal-dependent reduction by NADPH to yield (R)-2,3-dihydroxy-isovalerate. The protein is Ketol-acid reductoisomerase (NADP(+)) of Dehalococcoides mccartyi (strain CBDB1).